We begin with the raw amino-acid sequence, 370 residues long: Divinyl chlorophyll a/b light-harvesting protein PcbD (370 aa).

6 helical membrane-spanning segments follow: residues 27–47, 88–108, 140–160, 201–221, 248–268, and 315–335; these read FIAS…GSTL, VAAV…GALL, FILG…VEWA, VMGG…IHMV, AVLS…AFWA, and LVNV…WHAL.

Belongs to the PsbB/PsbC family. IsiA/Pcb subfamily. The antenna complex consists of divinyl chlorophylls (a and b) and divinyl chlorophyll a/b binding proteins and binds more divinyl chlorophyll b than does the antenna complex from high-light-adapted Prochlorococcus. Divinyl chlorophyll a serves as cofactor. It depends on divinyl chlorophyll b as a cofactor.

It localises to the cellular thylakoid membrane. In terms of biological role, the antenna complex functions as a light receptor, it captures and delivers excitation energy to photosystems II and I. The Prochlorales pcb genes are not related to higher plant LHCs. This Prochlorococcus marinus (strain NATL2A) protein is Divinyl chlorophyll a/b light-harvesting protein PcbD (pcbD).